The primary structure comprises 651 residues: Threonine--tRNA ligase (651 aa).

Positions 1–61 (MIKITFPDNS…NDDATVKLLK (61 aa)) constitute a TGS domain. A catalytic region spans residues 242–541 (DHRKIGKEMD…LIEHTAGKFP (300 aa)). 3 residues coordinate Zn(2+): Cys-337, His-388, and His-518.

This sequence belongs to the class-II aminoacyl-tRNA synthetase family. In terms of assembly, homodimer. Zn(2+) serves as cofactor.

Its subcellular location is the cytoplasm. The enzyme catalyses tRNA(Thr) + L-threonine + ATP = L-threonyl-tRNA(Thr) + AMP + diphosphate + H(+). Functionally, catalyzes the attachment of threonine to tRNA(Thr) in a two-step reaction: L-threonine is first activated by ATP to form Thr-AMP and then transferred to the acceptor end of tRNA(Thr). Also edits incorrectly charged L-seryl-tRNA(Thr). The chain is Threonine--tRNA ligase from Parabacteroides distasonis (strain ATCC 8503 / DSM 20701 / CIP 104284 / JCM 5825 / NCTC 11152).